We begin with the raw amino-acid sequence, 257 residues long: Tryptophan synthase alpha chain (257 aa).

Residues E51 and D62 each act as proton acceptor in the active site.

It belongs to the TrpA family. Tetramer of two alpha and two beta chains.

The enzyme catalyses (1S,2R)-1-C-(indol-3-yl)glycerol 3-phosphate + L-serine = D-glyceraldehyde 3-phosphate + L-tryptophan + H2O. It participates in amino-acid biosynthesis; L-tryptophan biosynthesis; L-tryptophan from chorismate: step 5/5. The alpha subunit is responsible for the aldol cleavage of indoleglycerol phosphate to indole and glyceraldehyde 3-phosphate. The polypeptide is Tryptophan synthase alpha chain (Nitratidesulfovibrio vulgaris (strain DP4) (Desulfovibrio vulgaris)).